Consider the following 303-residue polypeptide: Succinate--CoA ligase [ADP-forming] subunit alpha (303 aa).

CoA is bound by residues 20–23, lysine 46, and 108–110; these read TGSE and ITE. Residue tyrosine 173 coordinates substrate. Histidine 259 functions as the Tele-phosphohistidine intermediate in the catalytic mechanism.

It belongs to the succinate/malate CoA ligase alpha subunit family. In terms of assembly, heterotetramer of two alpha and two beta subunits.

It carries out the reaction succinate + ATP + CoA = succinyl-CoA + ADP + phosphate. It catalyses the reaction GTP + succinate + CoA = succinyl-CoA + GDP + phosphate. It functions in the pathway carbohydrate metabolism; tricarboxylic acid cycle; succinate from succinyl-CoA (ligase route): step 1/1. In terms of biological role, succinyl-CoA synthetase functions in the citric acid cycle (TCA), coupling the hydrolysis of succinyl-CoA to the synthesis of either ATP or GTP and thus represents the only step of substrate-level phosphorylation in the TCA. The alpha subunit of the enzyme binds the substrates coenzyme A and phosphate, while succinate binding and nucleotide specificity is provided by the beta subunit. This chain is Succinate--CoA ligase [ADP-forming] subunit alpha, found in Mycobacterium tuberculosis (strain CDC 1551 / Oshkosh).